The primary structure comprises 160 residues: Eosinophil cationic protein (160 aa).

The first 27 residues, 1–27, serve as a signal peptide directing secretion; sequence MVPKLFTPQICLLLLLGLMGVEGSLHA. Residues 28–72 are required for nearly all of the bactericidal activities; partially involved in LPS-binding; sequence RPPQFTKAQWFAIQHINVNPPRCTIAMRVINNYQRRCKNQNTFLR. Histidine 42 acts as the Proton acceptor in catalysis. 4 disulfides stabilise this stretch: cysteine 50–cysteine 110, cysteine 64–cysteine 123, cysteine 82–cysteine 138, and cysteine 89–cysteine 98. Residue tyrosine 60 is modified to 3'-nitrotyrosine. Position 65–69 (65–69) interacts with substrate; sequence KNQNT. 3 N-linked (GlcNAc...) asparagine glycosylation sites follow: asparagine 84, asparagine 92, and asparagine 119. The active-site Proton donor is histidine 155.

This sequence belongs to the pancreatic ribonuclease family. In terms of assembly, interacts with bacterial lipopolysaccharide (LPS) and lipoteichoic acid (LTA). In vitro interacts with phospholipid bilayers.

It localises to the secreted. In terms of biological role, cytotoxin and helminthotoxin with low-efficiency ribonuclease activity. Possesses a wide variety of biological activities. Exhibits antibacterial activity. The polypeptide is Eosinophil cationic protein (RNASE3) (Macaca nemestrina (Pig-tailed macaque)).